The sequence spans 231 residues: MAKLTKRQKAIAEKIEAGKSYNFEEAATLLASLPAAKFVESFDVAVNLGVDPRKSDQVVRSATVLPHGTGKTVRVAVFTQGPAAEAALAAGADRVGMDELAAEMKGGDLNYDVVIASPDAMRVVGQLGQILGPRGLMPNPKVGTVTPDVATAVKNAKAGQVRYRTDKNGIIHTSVGKIGFDAVKLKENVEALIADLKRIKPASSKGIYVKRVTLSTTMGPGLVIDQSSLDA.

The protein belongs to the universal ribosomal protein uL1 family. Part of the 50S ribosomal subunit.

In terms of biological role, binds directly to 23S rRNA. The L1 stalk is quite mobile in the ribosome, and is involved in E site tRNA release. Protein L1 is also a translational repressor protein, it controls the translation of the L11 operon by binding to its mRNA. The sequence is that of Large ribosomal subunit protein uL1 from Pseudomonas fluorescens (strain Pf0-1).